Here is a 133-residue protein sequence, read N- to C-terminus: Interleukin-4 (133 aa).

Residues 1–24 (MGLTSQLIPTLVCLLVCTSNFAHG) form the signal peptide. 3 disulfides stabilise this stretch: C27/C133, C48/C85, and C70/C105. N-linked (GlcNAc...) asparagine glycosylation is found at N62, N96, N102, and N108.

It belongs to the IL-4/IL-13 family.

It is found in the secreted. Participates in at least several B-cell activation processes as well as of other cell types. It is a costimulator of DNA-synthesis. It induces the expression of class II MHC molecules on resting B-cells. It enhances both secretion and cell surface expression of IgE and IgG1. It also regulates the expression of the low affinity Fc receptor for IgE (CD23) on both lymphocytes and monocytes. Positively regulates IL31RA expression in macrophages. Stimulates autophagy in dendritic cells by interfering with mTORC1 signaling and through the induction of RUFY4. The chain is Interleukin-4 (IL4) from Lama glama (Llama).